A 313-amino-acid polypeptide reads, in one-letter code: MVDCTKPIAESNNFIILDKYNPDWKITESYQSEGDLERELIQDLVNQGYEYLPTLNNTKAMLANVREQLQNLNNVEFLEAEWRRFVETWMDKPSDGVVEKARKIHDDYVHDFVFDDGRIQNIYLLDRKNILRNKVQVIKQFEQAGTHANRYDVTILVNGLPLVQIELKKRGVAIREAFNQIHRYSKESFNSENSLFKYLQLFVISNGTDTRYFANTTKRDKNSFDFTMNWAKSDNTLIKDLKDFTATFFQKHTLLNVLVNYSVFDSSQTLLVMRPYQIAATERILWKIKSSFTSEELVKTGKRWVYLAHYRFW.

The protein belongs to the HsdR family. In terms of assembly, the type I restriction/modification system is composed of three polypeptides R, M and S; the restriction enzyme has stoichiometry R(2)M(2)S(1) while the methyltransferase is M(2)S(1).

It catalyses the reaction Endonucleolytic cleavage of DNA to give random double-stranded fragments with terminal 5'-phosphates, ATP is simultaneously hydrolyzed.. In terms of biological role, the subtype C restriction (R) subunit of a type I restriction enzyme that recognizes 5'-CCAN(7)RTGC-3' and cleaves a random distance away. The R subunit is required for both endonuclease and ATPase activities but not for modification. Cleaves only non-methylated DNA, hemi-methylated and fully methylated DNA are not substrates. After locating a non-methylated recognition site, the enzyme complex serves as a molecular motor that translocates DNA in an ATP-dependent manner until a collision occurs that triggers cleavage. The prr locus restricts phage T4 mutants lacking polynucleotide kinase or RNA ligase; T4 mutants lacking these genes manifest a T4-induced anticodon nuclease (ACNase). This is a putative 'masking-agent' for the ACNase encoded by prrC. It is thought that Stp and other T4-encoded ACNase factors counteract the masking agents, thus activating the latent ACNase. This chain is Type I restriction enzyme EcoprrI endonuclease subunit, found in Escherichia coli.